We begin with the raw amino-acid sequence, 955 residues long: Alpha-1,4 glucan phosphorylase L isozyme, chloroplastic/amyloplastic (955 aa).

A chloroplast-targeting transit peptide spans 1 to 43 (MSRLSGITPRARDDRSQFQNPRLEIAVPDRTAGLQRTKRTLLV). The tract at residues 522 to 550 (KVVTESEKDELEEKDTELEKDEDPVPAPI) is disordered. Acidic residues predominate over residues 528–545 (EKDELEEKDTELEKDEDP). K801 is subject to N6-(pyridoxal phosphate)lysine.

Belongs to the glycogen phosphorylase family. Pyridoxal 5'-phosphate serves as cofactor.

It is found in the plastid. The protein localises to the chloroplast. The protein resides in the amyloplast. The catalysed reaction is [(1-&gt;4)-alpha-D-glucosyl](n) + phosphate = [(1-&gt;4)-alpha-D-glucosyl](n-1) + alpha-D-glucose 1-phosphate. In terms of biological role, phosphorylase is an important allosteric enzyme in carbohydrate metabolism. Enzymes from different sources differ in their regulatory mechanisms and in their natural substrates. However, all known phosphorylases share catalytic and structural properties. This chain is Alpha-1,4 glucan phosphorylase L isozyme, chloroplastic/amyloplastic, found in Ipomoea batatas (Sweet potato).